We begin with the raw amino-acid sequence, 163 residues long: Lipoprotein signal peptidase (163 aa).

Helical transmembrane passes span 8–28 (FFLLGLILTVGIDQAVKYWVM), 61–81 (FSHWGLIFLTLIILIFLLWLW), and 93–113 (FGFTLIIGGAIGNLIDRICFY). Catalysis depends on residues aspartate 117 and aspartate 136. Residues 128–148 (YFAVFNLADTFITLGVIAIII) form a helical membrane-spanning segment.

The protein belongs to the peptidase A8 family.

The protein localises to the cell inner membrane. It carries out the reaction Release of signal peptides from bacterial membrane prolipoproteins. Hydrolyzes -Xaa-Yaa-Zaa-|-(S,diacylglyceryl)Cys-, in which Xaa is hydrophobic (preferably Leu), and Yaa (Ala or Ser) and Zaa (Gly or Ala) have small, neutral side chains.. It functions in the pathway protein modification; lipoprotein biosynthesis (signal peptide cleavage). In terms of biological role, this protein specifically catalyzes the removal of signal peptides from prolipoproteins. The protein is Lipoprotein signal peptidase of Bartonella henselae (strain ATCC 49882 / DSM 28221 / CCUG 30454 / Houston 1) (Rochalimaea henselae).